The sequence spans 190 residues: Potassium-transporting ATPase KdpC subunit (190 aa).

A helical transmembrane segment spans residues 15–35 (LWILTALIYPAIVLVIGQLVF).

This sequence belongs to the KdpC family. As to quaternary structure, the system is composed of three essential subunits: KdpA, KdpB and KdpC.

Its subcellular location is the cell inner membrane. In terms of biological role, part of the high-affinity ATP-driven potassium transport (or Kdp) system, which catalyzes the hydrolysis of ATP coupled with the electrogenic transport of potassium into the cytoplasm. This subunit acts as a catalytic chaperone that increases the ATP-binding affinity of the ATP-hydrolyzing subunit KdpB by the formation of a transient KdpB/KdpC/ATP ternary complex. This chain is Potassium-transporting ATPase KdpC subunit, found in Synechocystis sp. (strain ATCC 27184 / PCC 6803 / Kazusa).